The sequence spans 261 residues: Type III pantothenate kinase (261 aa).

ATP is bound at residue aspartate 6–lysine 13. Glycine 108–arginine 111 is a substrate binding site. Aspartate 110 functions as the Proton acceptor in the catalytic mechanism. Position 134 (threonine 134) interacts with ATP. A substrate-binding site is contributed by threonine 188.

It belongs to the type III pantothenate kinase family. In terms of assembly, homodimer. It depends on NH4(+) as a cofactor. The cofactor is K(+).

It is found in the cytoplasm. The enzyme catalyses (R)-pantothenate + ATP = (R)-4'-phosphopantothenate + ADP + H(+). It participates in cofactor biosynthesis; coenzyme A biosynthesis; CoA from (R)-pantothenate: step 1/5. Its function is as follows. Catalyzes the phosphorylation of pantothenate (Pan), the first step in CoA biosynthesis. This chain is Type III pantothenate kinase, found in Sphingopyxis alaskensis (strain DSM 13593 / LMG 18877 / RB2256) (Sphingomonas alaskensis).